The primary structure comprises 1107 residues: MGKTIQVFGFPNGVSAEEVKKFLERLTGSGTVYAIKVRQPKKGGPRVYAIVQFTSERHTRLIITAAAERLYYGRSYLKAFEVEQDIVPKPRASLHTISGLKMFFGCQVSTKKFLTLWSAQDVCVSFGIGMRKLHFSFSWYQKDYRLELSYENIWQIDLHSPQGRSSKFLVIQVIGAPKIFEKEDQPINLLFGIMDFYSDGSDEQWIRTTDFTSSSCIGQSTAFCLELPVHLNVPDFRENFANYAEHRASSFLIESGSSYSSNANTLVPVVDPPPGFSLPFEILFKLNTLVQNACLSGPALDLDFYRLLNQKKYDRALIDHCLEKLFHLGECCYEPAHWLRDEYKKWISKGKLPLSPTISLDDGLVYMYRVQVTPARVYFSGPEVNVSNRVLRHYSKYINNFLRVSFVDEDLEKVRSMDLSPRSSTQRRTKLYDRIYSVLRDGIVIGDKKFEFLAFSSSQLRENSAWMFAPIDRITAAHIRAWMGDFDHIRNVAKYAARLGQSFSSSRETLNVRSDEIEVIPDVEIISLGTRYVFSDGIGKISAEFARKVARKCGLTEFSPSAFQIRYGGYKGVVAVDPNSSKKLSLRKSMSKFESENTKLDVLAWSKYQPCYMNRQLITLLSTLGVTDSVFEKKQREVVDRLDAILTHPLEAHEALGLMAPGENTNILKALILCGYKPDAEPFLSMMLQNFRASKLLELRTKTRIFISGGRSMMGCLDETRTLEYGQVVVQYSDPMRPGRRFIITGPVVVAKNPCLHPGDVRVLQAVNVPALNHMVDCVVFPQKGLRPHPNECSGSDLDGDIYFVCWDQELVPPRTSEPMDYTPEPTQILDHDVTIEEVEEYFANYIVNDSLGIIANAHTAFADKEPLKAFSDPCIELAKKFSTAVDFPKTGVAAVIPQHLYVKEYPDFMEKPDKPTYESKNVIGKLFREVKERAPPLISIKSFTLDVASKSYDKDMEVDGFEEYVDEAFYQKANYDFKLGNLMDYYGIKTEAEILSGGIMRMSKSFTKRRDAESIGRAVRALRKETLSLFNASEEEENESAKASAWYHVTYHSSYWGLYNEGLNRDHFLSFAWCVYDKLVRIKKTNLGRRQRQETLERLDHVLRFG.

It belongs to the RdRP family.

The enzyme catalyses RNA(n) + a ribonucleoside 5'-triphosphate = RNA(n+1) + diphosphate. RNA-dependent direct polymerase involved in antiviral silencing. Required for the production of some small RNAs (mainly 21 and some 22 nucleotides) derived from the crucifer-infecting tobamovirus (TMV-cg). Required for turnip mosaic virus (TuMV) silencing and accumulation of viral siRNAs. Involved in cucumber mosaic virus (CMV) silencing. Required for the biogenesis of viral secondary siRNAs, process that follows the production of primary siRNAs derived from viral RNA replication. Specifically targets the positive-strand of the 3 RNA genomes of CMV and preferentially amplifies the 5'-terminal siRNAs of each viral genomic RNA. Not involved in the production of siRNAs derived from a single-stranded 336-nucleotide satellite RNA of CMV. This is RNA-dependent RNA polymerase 1 (RDR1) from Arabidopsis thaliana (Mouse-ear cress).